The primary structure comprises 332 residues: DNA-directed RNA polymerase subunit alpha (332 aa).

The segment at 1-232 (MQVSNFLKPR…DQLTAFVELE (232 aa)) is alpha N-terminal domain (alpha-NTD). The tract at residues 246-332 (IDPVLLQPID…LREEETKVTA (87 aa)) is alpha C-terminal domain (alpha-CTD).

This sequence belongs to the RNA polymerase alpha chain family. In terms of assembly, homodimer. The RNAP catalytic core consists of 2 alpha, 1 beta, 1 beta' and 1 omega subunit. When a sigma factor is associated with the core the holoenzyme is formed, which can initiate transcription.

The catalysed reaction is RNA(n) + a ribonucleoside 5'-triphosphate = RNA(n+1) + diphosphate. In terms of biological role, DNA-dependent RNA polymerase catalyzes the transcription of DNA into RNA using the four ribonucleoside triphosphates as substrates. In Nitrosococcus oceani (strain ATCC 19707 / BCRC 17464 / JCM 30415 / NCIMB 11848 / C-107), this protein is DNA-directed RNA polymerase subunit alpha.